The following is a 118-amino-acid chain: DNA-binding protein inhibitor ID-3-B (118 aa).

The bHLH domain occupies 32-84 (SLKGAGIDETMGLLYDMNGCYSKLKELVPGIPQGSKLSQVEILQHVIDYIFDL).

As to quaternary structure, homodimer. Heterodimer with other HLH proteins. Interacts (via HLH domain) with the bHLH protein hes4/hairy2 (via Orange domain). Interacts with stat3.

The protein localises to the nucleus. Transcriptional regulator (lacking a basic DNA binding domain) which negatively regulates the basic helix-loop-helix (bHLH) transcription factors by forming heterodimers and inhibiting their DNA binding and transcriptional activity. Influences cell fate decisions in the embryo by sequestering and blocking the activity of the bHLH transcription factors that control these decisions. Inhibits the binding of myogenic bHLH-containing complexes to E-box DNA, thereby preventing activation of muscle-specific target genes. Also inhibits the activity of neurogenic factor neurod1/neuroD. Plays a role in cell cycle progression and survival of neural crest progenitors; binding to either hes4-B/hairy2b or stat3 blocks the formation of transcription factor complexes and the repressor function of hes4-B/hairy2B, to allow neural crest progenitors to differentiate. May play a role in the regulation of the circadian rhythm. In Xenopus laevis (African clawed frog), this protein is DNA-binding protein inhibitor ID-3-B (id3-b).